A 252-amino-acid polypeptide reads, in one-letter code: Small capsomere-interacting protein (252 aa).

The segment at 69–252 (NKKRSGGPEK…APRGKLGKGR (184 aa)) is disordered. Positions 83–93 (ANPGAGPQNAP) are enriched in low complexity. Gly residues predominate over residues 94–109 (GCGGGGSGSGGSGPPG). Residues 182-192 (PPAPPPLPQVP) are compositionally biased toward pro residues. The span at 213 to 237 (LPQQLGTAGSDNSGGQASSPGSQNP) shows a compositional bias: polar residues.

It belongs to the herpesviridae small capsomere-interacting protein family. As to quaternary structure, interacts with the major capsid protein/MCP.

It is found in the virion. The protein localises to the host nucleus. In terms of biological role, participates in the assembly of the infectious particles by decorating the outer surface of the capsid shell and thus forming a layer between the capsid and the tegument. Complexes composed of the major capsid protein and small capsomere-interacting protein/SCP assemble together in the host cytoplasm and are translocated to the nucleus, where they accumulate and participate in capsid assembly. This Connochaetes taurinus (Blue wildebeest) protein is Small capsomere-interacting protein.